Reading from the N-terminus, the 96-residue chain is uncharacterized protein (96 aa).

A signal peptide spans 1 to 28 (MNKKAIVGIFMSILMAGLVGCAGSSDAQ).

This is an uncharacterized protein from Butyrivibrio fibrisolvens.